The primary structure comprises 445 residues: UDP-N-acetylmuramate--L-alanine ligase (445 aa).

Residue 108–114 (GSDGKTT) participates in ATP binding.

This sequence belongs to the MurCDEF family.

The protein localises to the cytoplasm. It catalyses the reaction UDP-N-acetyl-alpha-D-muramate + L-alanine + ATP = UDP-N-acetyl-alpha-D-muramoyl-L-alanine + ADP + phosphate + H(+). Its pathway is cell wall biogenesis; peptidoglycan biosynthesis. Its function is as follows. Cell wall formation. The polypeptide is UDP-N-acetylmuramate--L-alanine ligase (Pseudothermotoga lettingae (strain ATCC BAA-301 / DSM 14385 / NBRC 107922 / TMO) (Thermotoga lettingae)).